Reading from the N-terminus, the 56-residue chain is Small ribosomal subunit protein uS14 (56 aa).

Zn(2+) contacts are provided by Cys-21, Cys-24, Cys-39, and Cys-42.

It belongs to the universal ribosomal protein uS14 family. In terms of assembly, component of the 40S small ribosomal subunit. It depends on Zn(2+) as a cofactor.

It is found in the cytoplasm. Its subcellular location is the cytosol. The protein localises to the rough endoplasmic reticulum. In Spodoptera frugiperda (Fall armyworm), this protein is Small ribosomal subunit protein uS14 (RpS29).